The sequence spans 276 residues: NAD-capped RNA hydrolase NudC (276 aa).

Arg-82 provides a ligand contact to substrate. Zn(2+)-binding residues include Cys-112 and Cys-115. Glu-125 contributes to the substrate binding site. Zn(2+)-binding residues include Cys-130 and Cys-133. Residue Tyr-138 participates in substrate binding. The Nudix hydrolase domain occupies 139–262 (PRISPSMIVL…SIARYLIDLY (124 aa)). Ala-172, Glu-188, and Glu-192 together coordinate a divalent metal cation. The Nudix box motif lies at 173–194 (GFAEPGESAEDCLIREVREEVS). 206 to 213 (QCWPFPHS) serves as a coordination point for substrate. Glu-233 contributes to the a divalent metal cation binding site. Position 255 (Ala-255) interacts with substrate.

It belongs to the Nudix hydrolase family. NudC subfamily. Homodimer. The cofactor is Mg(2+). Requires Mn(2+) as cofactor. Zn(2+) is required as a cofactor.

The catalysed reaction is a 5'-end NAD(+)-phospho-ribonucleoside in mRNA + H2O = a 5'-end phospho-adenosine-phospho-ribonucleoside in mRNA + beta-nicotinamide D-ribonucleotide + 2 H(+). It catalyses the reaction NAD(+) + H2O = beta-nicotinamide D-ribonucleotide + AMP + 2 H(+). The enzyme catalyses NADH + H2O = reduced beta-nicotinamide D-ribonucleotide + AMP + 2 H(+). In terms of biological role, mRNA decapping enzyme that specifically removes the nicotinamide adenine dinucleotide (NAD) cap from a subset of mRNAs by hydrolyzing the diphosphate linkage to produce nicotinamide mononucleotide (NMN) and 5' monophosphate mRNA. The NAD-cap is present at the 5'-end of some mRNAs and stabilizes RNA against 5'-processing. Has preference for mRNAs with a 5'-end purine. Catalyzes the hydrolysis of a broad range of dinucleotide pyrophosphates. This is NAD-capped RNA hydrolase NudC from Pseudomonas fluorescens (strain ATCC BAA-477 / NRRL B-23932 / Pf-5).